The sequence spans 309 residues: MIIVTGGAGFIGSNIIKALNDKGITDILVVDNLKDGTKFANLVDLNIADYMDKEDFLIQLMAGEEFGEIEAIFHEGACSSTTEWDGKYMMDNNYQYSKEVLHYCLEHEIPFLYASSAATYGGRTSDFIESREYEQPLNVYGYSKFLFDEYVRQILPEANSQIVGFRYFNVYGPREGHKGSMASVAFHLNTQLNNGETPKLFEGSDGFKRDFVYVGDVAAVNLWFWENGVSGIFNLGTGRAESFQAVADAALAFHKKDSLEYIPFPEKLKGRYQAFTQADLTNLRAAGYDKPFKTVAEGVAEYMAWLNRN.

Residues 10–11 (FI), 31–32 (DN), Lys-38, Lys-53, 75–79 (EGACS), and Asn-92 each bind NADP(+). Tyr-140 (proton acceptor) is an active-site residue. NADP(+) is bound at residue Lys-144. Asn-169 contacts substrate. NADP(+) contacts are provided by Val-170 and Lys-178. The Proton acceptor role is filled by Lys-178. Residues Ser-180, His-187, 201–204 (FEGS), Arg-209, and Tyr-272 contribute to the substrate site.

It belongs to the NAD(P)-dependent epimerase/dehydratase family. HldD subfamily. As to quaternary structure, homopentamer. NADP(+) is required as a cofactor.

The enzyme catalyses ADP-D-glycero-beta-D-manno-heptose = ADP-L-glycero-beta-D-manno-heptose. Its pathway is nucleotide-sugar biosynthesis; ADP-L-glycero-beta-D-manno-heptose biosynthesis; ADP-L-glycero-beta-D-manno-heptose from D-glycero-beta-D-manno-heptose 7-phosphate: step 4/4. In terms of biological role, catalyzes the interconversion between ADP-D-glycero-beta-D-manno-heptose and ADP-L-glycero-beta-D-manno-heptose via an epimerization at carbon 6 of the heptose. The sequence is that of ADP-L-glycero-D-manno-heptose-6-epimerase from Enterobacter sp. (strain 638).